The chain runs to 256 residues: MNNDVFPNKFKAALAAKQVQIGCWSALSNPISTEVLGLAGFDWLVLDGEHAPNDISTFIPQLMALKGSASAPVVRVPTNEPVIIKRLLDIGFYNFLIPFVETKEEAEQAVASTRYPPEGIRGVSVSHRTNMFGTVADYFAQSNKNITILVQIESQQGVDNVDAIAATEGVDGIFVGPSDLAAALGHLGNASHPDVQKAIQHIFNRASAHGKPSGILAPVEADARRYLEWGATFVAVGSDLGVFRSATQKLADTFKK.

Histidine 50 (proton acceptor) is an active-site residue. Glutamine 151 serves as a coordination point for substrate. Glutamate 153 contributes to the Mg(2+) binding site. Residues serine 178 and aspartate 179 each coordinate substrate. Aspartate 179 provides a ligand contact to Mg(2+).

It belongs to the HpcH/HpaI aldolase family. KDGluc aldolase subfamily. In terms of assembly, homohexamer; trimer of dimers. Mg(2+) serves as cofactor.

The catalysed reaction is 5-dehydro-4-deoxy-D-glucarate = 2-hydroxy-3-oxopropanoate + pyruvate. The enzyme catalyses 2-dehydro-3-deoxy-D-glucarate = 2-hydroxy-3-oxopropanoate + pyruvate. The protein operates within carbohydrate acid metabolism; galactarate degradation; D-glycerate from galactarate: step 2/3. Functionally, catalyzes the reversible retro-aldol cleavage of both 5-keto-4-deoxy-D-glucarate and 2-keto-3-deoxy-D-glucarate to pyruvate and tartronic semialdehyde. The sequence is that of 5-keto-4-deoxy-D-glucarate aldolase from Shigella sonnei (strain Ss046).